The following is a 334-amino-acid chain: Phospho-N-acetylmuramoyl-pentapeptide-transferase (334 aa).

The next 10 helical transmembrane spans lie at 2–22 (IPVL…GPVV), 55–75 (VIFL…PGGV), 78–98 (GWIE…LGFM), 116–136 (EKLL…VFVL), 154–174 (GLAL…VVLA), 187–207 (GLAA…ALVM), 211–231 (WVGI…CYNF), 236–256 (VFMG…AAVI), 262–282 (FLLI…IQVI), and 311–331 (VVLT…AGLK).

Belongs to the glycosyltransferase 4 family. MraY subfamily. It depends on Mg(2+) as a cofactor.

It localises to the cell membrane. The catalysed reaction is UDP-N-acetyl-alpha-D-muramoyl-L-alanyl-gamma-D-glutamyl-meso-2,6-diaminopimeloyl-D-alanyl-D-alanine + di-trans,octa-cis-undecaprenyl phosphate = di-trans,octa-cis-undecaprenyl diphospho-N-acetyl-alpha-D-muramoyl-L-alanyl-D-glutamyl-meso-2,6-diaminopimeloyl-D-alanyl-D-alanine + UMP. It functions in the pathway cell wall biogenesis; peptidoglycan biosynthesis. Functionally, catalyzes the initial step of the lipid cycle reactions in the biosynthesis of the cell wall peptidoglycan: transfers peptidoglycan precursor phospho-MurNAc-pentapeptide from UDP-MurNAc-pentapeptide onto the lipid carrier undecaprenyl phosphate, yielding undecaprenyl-pyrophosphoryl-MurNAc-pentapeptide, known as lipid I. This chain is Phospho-N-acetylmuramoyl-pentapeptide-transferase, found in Desulforudis audaxviator (strain MP104C).